We begin with the raw amino-acid sequence, 106 residues long: Hydrogenase expression/formation protein HoxL (106 aa).

The protein belongs to the HupF/HypC family.

The protein is Hydrogenase expression/formation protein HoxL (hoxL) of Azotobacter vinelandii.